A 227-amino-acid polypeptide reads, in one-letter code: Peroxisomal membrane protein 11B (227 aa).

At 1-85 (MSLDTVDKLV…RNPGATPMIR (85 aa)) the chain is on the cytoplasmic side. A helical transmembrane segment spans residues 86–106 (FLAVLANSGEMVYFFFDHFLW). The Lumenal segment spans residues 107–201 (LSRIGSIDAK…IALAEIHPNP (95 aa)). A helical membrane pass occupies residues 202 to 222 (FCNHTITLGISGLVSAWAGWY). Over 223–227 (RNWPS) the chain is Cytoplasmic.

The protein belongs to the peroxin-11 family. In terms of assembly, homooligomer. Interacts with ARC5 and FIS1B on peroxisomes. Expressed in roots, leaves and developing siliques.

It is found in the peroxisome membrane. In terms of biological role, involved in peroxisomal proliferation. Promotes peroxisomal duplication, aggregation or elongation without fission. In Arabidopsis thaliana (Mouse-ear cress), this protein is Peroxisomal membrane protein 11B (PEX11B).